A 404-amino-acid chain; its full sequence is Dual-specificity RNA methyltransferase RlmN (404 aa).

The Proton acceptor role is filled by E119. Residues 126 to 358 enclose the Radical SAM core domain; sequence VGRAGALCVS…NKAGYSSPIR (233 aa). A disulfide bridge links C133 with C369. [4Fe-4S] cluster is bound by residues C140, C144, and C147. Residues 195 to 196, S227, 249 to 251, and N326 contribute to the S-adenosyl-L-methionine site; these read GE and SLH. C369 acts as the S-methylcysteine intermediate in catalysis.

It belongs to the radical SAM superfamily. RlmN family. [4Fe-4S] cluster serves as cofactor.

The protein localises to the cytoplasm. It catalyses the reaction adenosine(2503) in 23S rRNA + 2 reduced [2Fe-2S]-[ferredoxin] + 2 S-adenosyl-L-methionine = 2-methyladenosine(2503) in 23S rRNA + 5'-deoxyadenosine + L-methionine + 2 oxidized [2Fe-2S]-[ferredoxin] + S-adenosyl-L-homocysteine. It carries out the reaction adenosine(37) in tRNA + 2 reduced [2Fe-2S]-[ferredoxin] + 2 S-adenosyl-L-methionine = 2-methyladenosine(37) in tRNA + 5'-deoxyadenosine + L-methionine + 2 oxidized [2Fe-2S]-[ferredoxin] + S-adenosyl-L-homocysteine. In terms of biological role, specifically methylates position 2 of adenine 2503 in 23S rRNA and position 2 of adenine 37 in tRNAs. m2A2503 modification seems to play a crucial role in the proofreading step occurring at the peptidyl transferase center and thus would serve to optimize ribosomal fidelity. The sequence is that of Dual-specificity RNA methyltransferase RlmN from Caulobacter sp. (strain K31).